The following is a 688-amino-acid chain: Glycine--tRNA ligase beta subunit (688 aa).

This sequence belongs to the class-II aminoacyl-tRNA synthetase family. Tetramer of two alpha and two beta subunits.

It localises to the cytoplasm. It catalyses the reaction tRNA(Gly) + glycine + ATP = glycyl-tRNA(Gly) + AMP + diphosphate. This is Glycine--tRNA ligase beta subunit from Shewanella sp. (strain MR-4).